Consider the following 490-residue polypeptide: ATP synthase subunit beta, chloroplastic (490 aa).

170-177 (GGAGVGKT) is an ATP binding site.

The protein belongs to the ATPase alpha/beta chains family. F-type ATPases have 2 components, CF(1) - the catalytic core - and CF(0) - the membrane proton channel. CF(1) has five subunits: alpha(3), beta(3), gamma(1), delta(1), epsilon(1). CF(0) has four main subunits: a(1), b(1), b'(1) and c(9-12).

It localises to the plastid. The protein resides in the chloroplast thylakoid membrane. It carries out the reaction ATP + H2O + 4 H(+)(in) = ADP + phosphate + 5 H(+)(out). Functionally, produces ATP from ADP in the presence of a proton gradient across the membrane. The catalytic sites are hosted primarily by the beta subunits. This Convolvulus arvensis (Field bindweed) protein is ATP synthase subunit beta, chloroplastic.